The chain runs to 1270 residues: ATP-dependent helicase/nuclease subunit A (1270 aa).

Positions threonine 3 to arginine 476 constitute a UvrD-like helicase ATP-binding domain. Alanine 24 to threonine 31 contacts ATP. Residues isoleucine 528–glycine 823 enclose the UvrD-like helicase C-terminal domain.

This sequence belongs to the helicase family. AddA subfamily. In terms of assembly, heterodimer of AddA and AddB/RexB. Mg(2+) is required as a cofactor.

The enzyme catalyses Couples ATP hydrolysis with the unwinding of duplex DNA by translocating in the 3'-5' direction.. The catalysed reaction is ATP + H2O = ADP + phosphate + H(+). Functionally, the heterodimer acts as both an ATP-dependent DNA helicase and an ATP-dependent, dual-direction single-stranded exonuclease. Recognizes the chi site generating a DNA molecule suitable for the initiation of homologous recombination. The AddA nuclease domain is required for chi fragment generation; this subunit has the helicase and 3' -&gt; 5' nuclease activities. This chain is ATP-dependent helicase/nuclease subunit A, found in Clostridium perfringens (strain SM101 / Type A).